Here is a 275-residue protein sequence, read N- to C-terminus: NH(3)-dependent NAD(+) synthetase (275 aa).

An ATP-binding site is contributed by 47-54 (GISGGQDS). Asp53 is a Mg(2+) binding site. Arg141 provides a ligand contact to deamido-NAD(+). Thr161 is a binding site for ATP. Glu166 is a Mg(2+) binding site. Positions 174 and 181 each coordinate deamido-NAD(+). ATP is bound by residues Lys190 and Thr212. A deamido-NAD(+)-binding site is contributed by 261–262 (HK).

It belongs to the NAD synthetase family. Homodimer.

It catalyses the reaction deamido-NAD(+) + NH4(+) + ATP = AMP + diphosphate + NAD(+) + H(+). The protein operates within cofactor biosynthesis; NAD(+) biosynthesis; NAD(+) from deamido-NAD(+) (ammonia route): step 1/1. Functionally, catalyzes the ATP-dependent amidation of deamido-NAD to form NAD. Uses ammonia as a nitrogen source. This Enterococcus faecalis (strain ATCC 700802 / V583) protein is NH(3)-dependent NAD(+) synthetase.